The following is a 460-amino-acid chain: Ammonium transporter Rh type B-B (460 aa).

Residues 1–10 are Cytoplasmic-facing; the sequence is MTSYSTNMRI. Residues 11–31 traverse the membrane as a helical segment; the sequence is KLPLFCLLLQFITIILFAVFV. The Extracellular portion of the chain corresponds to 32–62; it reads RYDHESDARGWHEELNNHSSSNADNDFYYRY. An N-linked (GlcNAc...) asparagine glycan is attached at Asn-48. The helical transmembrane segment at 63–83 threads the bilayer; the sequence is PSFQDVHVMIFIGFGFLMTFL. The Cytoplasmic segment spans residues 84–87; it reads KRYG. A helical membrane pass occupies residues 88 to 108; the sequence is FSSVAFNFLIAAFGLQWSTLI. The Extracellular segment spans residues 109–125; that stretch reads QGFFHGFHDGKIHVGIE. A helical transmembrane segment spans residues 126–146; the sequence is SMINADFCTGAVLISFGAVLG. Over 147-150 the chain is Cytoplasmic; that stretch reads KTSP. A helical transmembrane segment spans residues 151-171; it reads VQLIIMTLVEVTLFGINEYII. Topologically, residues 172 to 179 are extracellular; sequence LNIVGAKD. A helical membrane pass occupies residues 180-202; the sequence is AGGSMTIHTFGAYFGLIVSRVLY. Residues 203–220 are Cytoplasmic-facing; that stretch reads REDLEKSRQREGSVYHSD. Residues 221 to 241 form a helical membrane-spanning segment; sequence LFAMIGTIYLWMFWPSFNSAV. Residues 242–252 lie on the Extracellular side of the membrane; the sequence is TAHGDDQHRTV. A helical transmembrane segment spans residues 253 to 273; the sequence is MNTYYSLAACTLATFGFSALL. The Cytoplasmic portion of the chain corresponds to 274–283; the sequence is NGEGKLDMVH. The chain crosses the membrane as a helical span at residues 284–304; that stretch reads IQNAALAGGVAVGTSGEMMLT. Position 305 (Pro-305) is a topological domain, extracellular. Residues 306–326 traverse the membrane as a helical segment; that stretch reads FGAMIAGTLAGMISVLGYKYL. Residues 327 to 347 lie on the Cytoplasmic side of the membrane; that stretch reads TPVLDSKLKIQDTCGVHNLHG. The helical transmembrane segment at 348–368 threads the bilayer; it reads MPGILGAIIGAIVALFATADI. Residues 369 to 394 lie on the Extracellular side of the membrane; the sequence is YGDGMGDVFPLISDGSRTAKQQSLYQ. A helical membrane pass occupies residues 395-415; that stretch reads FLALLVALGFAIIGGTVVGFI. Over 416-460 the chain is Cytoplasmic; it reads LKLPIFGTPSDAECFEDAIYWEVPGGEGHQQLTVVINNEDPDTQA.

Belongs to the ammonium transporter (TC 2.A.49) family. Rh subfamily.

It localises to the basolateral cell membrane. Its subcellular location is the cytoplasmic vesicle membrane. Its function is as follows. Functions as a specific ammonium transporter. The chain is Ammonium transporter Rh type B-B (rhbg-b) from Xenopus laevis (African clawed frog).